Consider the following 289-residue polypeptide: Probable acetolactate synthase small subunit (289 aa).

Position 34 is a phosphoserine (Ser34). Residues 72 to 149 (VFNCLVQNEP…AVLDYTGTSM (78 aa)) form the ACT domain.

Belongs to the acetolactate synthase small subunit family.

The protein resides in the cytoplasm. It functions in the pathway amino-acid biosynthesis; L-isoleucine biosynthesis; L-isoleucine from 2-oxobutanoate: step 1/4. The protein operates within amino-acid biosynthesis; L-valine biosynthesis; L-valine from pyruvate: step 1/4. Stimulates activity of the acetolactate synthase catalytic subunit ilv1. This is Probable acetolactate synthase small subunit from Schizosaccharomyces pombe (strain 972 / ATCC 24843) (Fission yeast).